The primary structure comprises 304 residues: Kazal-type serine protease inhibitor domain-containing protein 1 (304 aa).

The signal sequence occupies residues 1 to 30 (MLPPPRPAAALALPVLLLLLVVLTPPPTGA). Residues 49-129 (EGEGCAPCRP…EVPEPLCACR (81 aa)) enclose the IGFBP N-terminal domain. Intrachain disulfides connect Cys53-Cys76, Cys56-Cys78, Cys61-Cys79, Cys67-Cys82, Cys90-Cys108, Cys102-Cys126, and Cys135-Cys168. Positions 120–170 (EVPEPLCACRSQSPLCGSDGHTYSQICRLQEAARARPDANLTVAHPGPCES) constitute a Kazal-like domain. Asn159 and Asn183 each carry an N-linked (GlcNAc...) asparagine glycan. Residues 172-269 (PQIVSHPYDT…GQVEAPASLT (98 aa)) enclose the Ig-like C2-type domain. Residues Cys193 and Cys253 are joined by a disulfide bond. N-linked (GlcNAc...) asparagine glycosylation is present at Asn277.

It is found in the secreted. The protein localises to the extracellular space. It localises to the extracellular matrix. In terms of biological role, involved in the proliferation of osteoblasts during bone formation and bone regeneration. Promotes matrix assembly. This Homo sapiens (Human) protein is Kazal-type serine protease inhibitor domain-containing protein 1 (KAZALD1).